We begin with the raw amino-acid sequence, 492 residues long: Fascin-2 (492 aa).

Belongs to the fascin family. Expressed in the inner ear. Abundant in the utricle.

Its subcellular location is the cytoplasm. It localises to the cytoskeleton. It is found in the cell projection. The protein localises to the stereocilium. Acts as an actin bundling protein. May play a pivotal role in photoreceptor cell-specific events, such as disk morphogenesis. Important for maintaining functional hair-cell bundles in the inner ear. May stiffen the longer stereocilia of hair-cell bundles in the inner ear enabling better force transmission to tip links. This Mus musculus (Mouse) protein is Fascin-2 (Fscn2).